The chain runs to 162 residues: MKLDQAAKALFLSEFVGAFLLSMRYFFKPKPTLNYPHEKNPQSPRYRGEHALRRYPNGEERCIACKLCEAICPAQAITIEAGPRRNDGTRRTTRYDIDMVKCIYCGFCQEACPVDAIVEGPNAEFSVETREELYYDKDRLLENGARWEREIARNIALDAPYR.

4Fe-4S ferredoxin-type domains lie at leucine 52–glycine 82 and threonine 93–asparagine 122. [4Fe-4S] cluster-binding residues include cysteine 62, cysteine 65, cysteine 68, cysteine 72, cysteine 102, cysteine 105, cysteine 108, and cysteine 112.

The protein belongs to the complex I 23 kDa subunit family. As to quaternary structure, NDH-1 is composed of 14 different subunits. Subunits NuoA, H, J, K, L, M, N constitute the membrane sector of the complex. It depends on [4Fe-4S] cluster as a cofactor.

Its subcellular location is the cell inner membrane. It catalyses the reaction a quinone + NADH + 5 H(+)(in) = a quinol + NAD(+) + 4 H(+)(out). Its function is as follows. NDH-1 shuttles electrons from NADH, via FMN and iron-sulfur (Fe-S) centers, to quinones in the respiratory chain. The immediate electron acceptor for the enzyme in this species is believed to be ubiquinone. Couples the redox reaction to proton translocation (for every two electrons transferred, four hydrogen ions are translocated across the cytoplasmic membrane), and thus conserves the redox energy in a proton gradient. This is NADH-quinone oxidoreductase subunit I from Methylocella silvestris (strain DSM 15510 / CIP 108128 / LMG 27833 / NCIMB 13906 / BL2).